Reading from the N-terminus, the 246-residue chain is Ribonuclease PH (246 aa).

Positions 67 to 87 (NMLPGSTSPRKRRDRSGKVDG) are disordered. Phosphate contacts are provided by residues Arg-88 and 126 to 128 (GTR).

The protein belongs to the RNase PH family. As to quaternary structure, homohexameric ring arranged as a trimer of dimers.

The catalysed reaction is tRNA(n+1) + phosphate = tRNA(n) + a ribonucleoside 5'-diphosphate. Functionally, phosphorolytic 3'-5' exoribonuclease that plays an important role in tRNA 3'-end maturation. Removes nucleotide residues following the 3'-CCA terminus of tRNAs; can also add nucleotides to the ends of RNA molecules by using nucleoside diphosphates as substrates, but this may not be physiologically important. Probably plays a role in initiation of 16S rRNA degradation (leading to ribosome degradation) during starvation. This chain is Ribonuclease PH, found in Rhodopirellula baltica (strain DSM 10527 / NCIMB 13988 / SH1).